Here is a 216-residue protein sequence, read N- to C-terminus: MVLWVFGYGSLIWNPGFDFDEKLIGYIKDYKRVFDLACIDHRGTPEHPARTCTLEQSTGAICWGAAYCVRGGPEKEKLAMEYLERRECEYDSKTLVEFYTENDTSTPIVTGVIVFTSTPDKVSNKYYLGPAPLEEMARQIATASGPCGNNREYLFKLEKAMFDIEHEEEYVIELANEVRKQLDLPEEVKALLKPIVSHVSVKSQAHVSTRQRVFAS.

5-10 (VFGYGS) serves as a coordination point for substrate. The active-site Proton acceptor is the Glu87.

The protein belongs to the gamma-glutamylcyclotransferase family. Mn(2+) is required as a cofactor. Expressed in the central vascular bundle of roots, leaf veins, hydathodes, cauline leaves, shoot apex, sepal veins, flower receptacles and developing seeds.

It is found in the cytoplasm. It carries out the reaction an alpha-(gamma-L-glutamyl)-L-amino acid = 5-oxo-L-proline + an L-alpha-amino acid. Its function is as follows. Catalyzes the formation of 5-oxoproline from gamma-glutamyl dipeptides and plays a significant role in glutathione (GSH) homeostasis. Converts both GSH and gamma-glutamyl-L-alanine to 5-oxoproline in vitro. Plays a role in detoxification of heavy metals and metalloids by recycling glutamate and maintaining GSH homeostasis. The chain is Gamma-glutamylcyclotransferase 2-1 from Arabidopsis thaliana (Mouse-ear cress).